The chain runs to 732 residues: Elongation factor 2 (732 aa).

The tr-type G domain occupies 19-228 (ELVRNIGIVA…TKITFKDIVE (210 aa)). Residues 28-35 (AHIDHGKT), 94-98 (DTPGH), and 148-151 (NKID) contribute to the GTP site. His598 is subject to Diphthamide.

Belongs to the TRAFAC class translation factor GTPase superfamily. Classic translation factor GTPase family. EF-G/EF-2 subfamily.

It localises to the cytoplasm. Its function is as follows. Catalyzes the GTP-dependent ribosomal translocation step during translation elongation. During this step, the ribosome changes from the pre-translocational (PRE) to the post-translocational (POST) state as the newly formed A-site-bound peptidyl-tRNA and P-site-bound deacylated tRNA move to the P and E sites, respectively. Catalyzes the coordinated movement of the two tRNA molecules, the mRNA and conformational changes in the ribosome. The protein is Elongation factor 2 of Thermoplasma volcanium (strain ATCC 51530 / DSM 4299 / JCM 9571 / NBRC 15438 / GSS1).